We begin with the raw amino-acid sequence, 338 residues long: RNA 3'-terminal phosphate cyclase (338 aa).

ATP is bound by residues Gln-103 and 283-287 (YLADQ). Residue His-308 is the Tele-AMP-histidine intermediate of the active site.

This sequence belongs to the RNA 3'-terminal cyclase family. Type 1 subfamily.

It is found in the cytoplasm. The enzyme catalyses a 3'-end 3'-phospho-ribonucleotide-RNA + ATP = a 3'-end 2',3'-cyclophospho-ribonucleotide-RNA + AMP + diphosphate. Its function is as follows. Catalyzes the conversion of 3'-phosphate to a 2',3'-cyclic phosphodiester at the end of RNA. The mechanism of action of the enzyme occurs in 3 steps: (A) adenylation of the enzyme by ATP; (B) transfer of adenylate to an RNA-N3'P to produce RNA-N3'PP5'A; (C) and attack of the adjacent 2'-hydroxyl on the 3'-phosphorus in the diester linkage to produce the cyclic end product. The biological role of this enzyme is unknown but it is likely to function in some aspects of cellular RNA processing. This Escherichia coli (strain K12 / MC4100 / BW2952) protein is RNA 3'-terminal phosphate cyclase.